An 881-amino-acid polypeptide reads, in one-letter code: Valine--tRNA ligase (881 aa).

Positions 49–59 match the 'HIGH' region motif; sequence PNVTGKLHLGH. The 'KMSKS' region motif lies at 526-530; the sequence is KMSKS. K529 serves as a coordination point for ATP. The stretch at 810–881 forms a coiled coil; that stretch reads LADLINLDEE…VRQRLADLEK (72 aa).

The protein belongs to the class-I aminoacyl-tRNA synthetase family. ValS type 1 subfamily. Monomer.

It localises to the cytoplasm. The enzyme catalyses tRNA(Val) + L-valine + ATP = L-valyl-tRNA(Val) + AMP + diphosphate. Its function is as follows. Catalyzes the attachment of valine to tRNA(Val). As ValRS can inadvertently accommodate and process structurally similar amino acids such as threonine, to avoid such errors, it has a 'posttransfer' editing activity that hydrolyzes mischarged Thr-tRNA(Val) in a tRNA-dependent manner. This Bacillus cereus (strain ATCC 10987 / NRS 248) protein is Valine--tRNA ligase.